The sequence spans 272 residues: NAD kinase (272 aa).

Aspartate 50 functions as the Proton acceptor in the catalytic mechanism. Residues 50 to 51, 126 to 127, arginine 152, aspartate 154, 165 to 170, and alanine 189 contribute to the NAD(+) site; these read DG, NE, and TAYNKS.

It belongs to the NAD kinase family. It depends on a divalent metal cation as a cofactor.

It localises to the cytoplasm. The enzyme catalyses NAD(+) + ATP = ADP + NADP(+) + H(+). In terms of biological role, involved in the regulation of the intracellular balance of NAD and NADP, and is a key enzyme in the biosynthesis of NADP. Catalyzes specifically the phosphorylation on 2'-hydroxyl of the adenosine moiety of NAD to yield NADP. The protein is NAD kinase of Streptococcus pneumoniae serotype 19F (strain G54).